Here is a 226-residue protein sequence, read N- to C-terminus: MKDLFLFSSLLDASHTFSYFFHIGLVALIAVIVAMMATRSMQLVPRGMQNLAEAFLEGVLSMGRDTMGSEKGVRKYLPLVATLGIIVFFSNIIGILPGFHAPTASLNLTLSLAIIVFVYYHFEGIRAQGFIKYFAHFMGPIKLLAPLMFPIEIVSHLSRVVSLSFRLFGNIKGDDLFLMVILALVPYIAPLPAYVLLTFMAFLQAFIFMILTYVYLAGATVVEKGH.

The next 6 membrane-spanning stretches (helical) occupy residues 17 to 37 (FSYF…AMMA), 79 to 99 (LVAT…LPGF), 105 to 125 (SLNL…FEGI), 134 to 154 (FAHF…IEIV), 176 to 196 (LFLM…AYVL), and 199 to 219 (FMAF…LAGA).

It belongs to the ATPase A chain family. F-type ATPases have 2 components, CF(1) - the catalytic core - and CF(0) - the membrane proton channel. CF(1) has five subunits: alpha(3), beta(3), gamma(1), delta(1), epsilon(1). CF(0) has three main subunits: a(1), b(2) and c(9-12). The alpha and beta chains form an alternating ring which encloses part of the gamma chain. CF(1) is attached to CF(0) by a central stalk formed by the gamma and epsilon chains, while a peripheral stalk is formed by the delta and b chains.

The protein resides in the cell inner membrane. In terms of biological role, key component of the proton channel; it plays a direct role in the translocation of protons across the membrane. This is ATP synthase subunit a from Campylobacter jejuni subsp. doylei (strain ATCC BAA-1458 / RM4099 / 269.97).